We begin with the raw amino-acid sequence, 391 residues long: L-tryptophan--pyruvate aminotransferase 1 (391 aa).

Pyridoxal 5'-phosphate-binding positions include Tyr58, 100–101 (ST), Asn168, 191–194 (DFAY), 214–217 (TFSK), and Arg225. An N6-(pyridoxal phosphate)lysine modification is found at Lys217.

This sequence belongs to the alliinase family. It depends on pyridoxal 5'-phosphate as a cofactor. As to expression, expressed at the leaf margin and in the vasculature of emerging young leaves. Expressed in the quiescent center and in the vasculature of root tips. Detected in the shoot apical meristem, stems, sepals, stamen filaments, the shoot and root junction, the stigma and the base of the silique.

It localises to the cytoplasm. The enzyme catalyses L-tryptophan + 2-oxoglutarate = indole-3-pyruvate + L-glutamate. It carries out the reaction L-tryptophan + pyruvate = indole-3-pyruvate + L-alanine. It functions in the pathway plant hormone metabolism; auxin biosynthesis. Its activity is regulated as follows. Inhibited by L-kynurenine. In terms of biological role, L-tryptophan aminotransferase involved in auxin (IAA) biosynthesis. Can convert L-tryptophan and pyruvate to indole-3-pyruvic acid (IPA) and alanine. Catalyzes the first step in IPA branch of the auxin biosynthetic pathway. Required for auxin production to initiate multiple change in growth in response to environmental and developmental cues. It is also active with phenylalanine, tyrosine, leucine, alanine, methionine and glutamine. Both TAA1 and TAR2 are required for maintaining proper auxin levels in roots, while TAA1, TAR1 and TAR2 are required for proper embryo patterning. Involved in the maintenance of the root stem cell niches and required for shade avoidance. This Arabidopsis thaliana (Mouse-ear cress) protein is L-tryptophan--pyruvate aminotransferase 1 (TAA1).